Reading from the N-terminus, the 461-residue chain is tRNA modification GTPase MnmE (461 aa).

3 residues coordinate (6S)-5-formyl-5,6,7,8-tetrahydrofolate: arginine 27, glutamate 89, and arginine 128. One can recognise a TrmE-type G domain in the interval 224-382; that stretch reads GLATAIVGRP…LENAIEQLFF (159 aa). Asparagine 234 serves as a coordination point for K(+). GTP is bound by residues 234–239, 253–259, and 278–281; these read NVGKSS, TDIAGTT, and DTAG. Residue serine 238 participates in Mg(2+) binding. K(+) contacts are provided by threonine 253, isoleucine 255, and threonine 258. Threonine 259 is a Mg(2+) binding site. Lysine 461 is a (6S)-5-formyl-5,6,7,8-tetrahydrofolate binding site.

It belongs to the TRAFAC class TrmE-Era-EngA-EngB-Septin-like GTPase superfamily. TrmE GTPase family. In terms of assembly, homodimer. Heterotetramer of two MnmE and two MnmG subunits. It depends on K(+) as a cofactor.

The protein localises to the cytoplasm. Its function is as follows. Exhibits a very high intrinsic GTPase hydrolysis rate. Involved in the addition of a carboxymethylaminomethyl (cmnm) group at the wobble position (U34) of certain tRNAs, forming tRNA-cmnm(5)s(2)U34. The polypeptide is tRNA modification GTPase MnmE (Lactobacillus johnsonii (strain CNCM I-12250 / La1 / NCC 533)).